We begin with the raw amino-acid sequence, 736 residues long: Subtilisin-like protease SBT4.11 (736 aa).

The signal sequence occupies residues 1–25; that stretch reads MAKRGAFSSFHSFLIVLLFLNSVLA. Positions 26-113 are cleaved as a propeptide — activation peptide; sequence VTHGHQDKQV…VFPNKKLKLQ (88 aa). Residues 35 to 112 form the Inhibitor I9 domain; it reads VYIVYMGSLP…SVFPNKKLKL (78 aa). In terms of domain architecture, Peptidase S8 spans 117 to 579; the sequence is SWDFMGLKEG…AGHVDPIAAT (463 aa). Asp145 functions as the Charge relay system in the catalytic mechanism. Asn176 is a glycosylation site (N-linked (GlcNAc...) asparagine). The active-site Charge relay system is His200. Residues Asn215 and Asn223 are each glycosylated (N-linked (GlcNAc...) asparagine). Positions 355–437 constitute a PA domain; that stretch reads KFPLVYGKSA…GLQKDDFESV (83 aa). Ser518 (charge relay system) is an active-site residue. 5 N-linked (GlcNAc...) asparagine glycosylation sites follow: Asn555, Asn602, Asn638, Asn646, and Asn656.

Belongs to the peptidase S8 family. In terms of processing, the C-terminal propeptide is autocleaved.

The protein localises to the secreted. This chain is Subtilisin-like protease SBT4.11, found in Arabidopsis thaliana (Mouse-ear cress).